An 84-amino-acid chain; its full sequence is Small ribosomal subunit protein uS17 (84 aa).

Belongs to the universal ribosomal protein uS17 family. In terms of assembly, part of the 30S ribosomal subunit.

One of the primary rRNA binding proteins, it binds specifically to the 5'-end of 16S ribosomal RNA. This chain is Small ribosomal subunit protein uS17, found in Yersinia enterocolitica serotype O:8 / biotype 1B (strain NCTC 13174 / 8081).